A 163-amino-acid chain; its full sequence is Cyanate hydratase (163 aa).

Active-site residues include Arg-103, Glu-106, and Ser-129.

The protein belongs to the cyanase family.

The catalysed reaction is cyanate + hydrogencarbonate + 3 H(+) = NH4(+) + 2 CO2. Its function is as follows. Catalyzes the reaction of cyanate with bicarbonate to produce ammonia and carbon dioxide. The sequence is that of Cyanate hydratase from Talaromyces marneffei (strain ATCC 18224 / CBS 334.59 / QM 7333) (Penicillium marneffei).